A 132-amino-acid polypeptide reads, in one-letter code: Small ribosomal subunit protein uS8c (132 aa).

The protein belongs to the universal ribosomal protein uS8 family. As to quaternary structure, part of the 30S ribosomal subunit.

The protein localises to the plastid. Its subcellular location is the chloroplast. One of the primary rRNA binding proteins, it binds directly to 16S rRNA central domain where it helps coordinate assembly of the platform of the 30S subunit. This is Small ribosomal subunit protein uS8c (rps8) from Platanus occidentalis (Sycamore).